Here is an 819-residue protein sequence, read N- to C-terminus: Protein kinase C-binding protein NELL2 (819 aa).

A signal peptide spans 1-24 (MHAMESRVLLRTFCVILGLEAVWG). Residues asparagine 56, asparagine 228, asparagine 296, and asparagine 301 are each glycosylated (N-linked (GlcNAc...) asparagine). The Laminin G-like domain occupies 58–231 (TKAFLFQDSP…AQCPDLNRTC (174 aa)). Positions 275–334 (RTCTMKGTTYREFESWTDGCKNCTCLNGTIQCETLVCPAPDCPAKSAPAYVDGKCCKECK) constitute a VWFC 1 domain. Residues 400–442 (GYDFCSEKHTCMENSVCRNLNDRAVCSCRDGFRALREDNAYCE) enclose the EGF-like 1 domain. 3 disulfides stabilise this stretch: cysteine 404/cysteine 416, cysteine 410/cysteine 425, and cysteine 427/cysteine 441. Residues aspartate 443, isoleucine 444, and glutamate 446 each coordinate Ca(2+). The 42-residue stretch at 443 to 484 (DIDECAEGRHYCRENTMCVNTPGSFLCICQTGYIRIDDYSCT) folds into the EGF-like 2; calcium-binding domain. Disulfide bonds link cysteine 447–cysteine 460, cysteine 454–cysteine 469, cysteine 471–cysteine 483, cysteine 489–cysteine 502, cysteine 496–cysteine 511, cysteine 513–cysteine 524, cysteine 528–cysteine 538, cysteine 532–cysteine 544, and cysteine 546–cysteine 555. Residues asparagine 462, threonine 463, and serine 466 each contribute to the Ca(2+) site. One can recognise an EGF-like 3; calcium-binding domain in the interval 485–525 (EHDECLTNQHNCDENALCFNTVGGHNCVCKPGYTGNGTTCK). N-linked (GlcNAc...) asparagine glycosylation occurs at asparagine 520. Positions 526–556 (AFCKDGCRNGGACIAANVCACPQGFTGPSCE) constitute an EGF-like 4 domain. Residue threonine 551 is glycosylated (O-linked (GlcNAc...) threonine). 3 residues coordinate Ca(2+): aspartate 558, isoleucine 559, and glutamate 561. Residues 558-604 (DIDECSEGFVQCDSRANCINLPGWYHCECRDGYHDNGMFAPGGESCE) enclose the EGF-like 5; calcium-binding domain. 3 disulfide bridges follow: cysteine 562-cysteine 575, cysteine 569-cysteine 584, and cysteine 586-cysteine 603. Ca(2+)-binding residues include asparagine 577, leucine 578, and tryptophan 581. Ca(2+) contacts are provided by aspartate 605, isoleucine 606, and glutamate 608. One can recognise an EGF-like 6; calcium-binding domain in the interval 605–640 (DIDECGTGRHSCANDTICFNLDGGYDCRCPHGKNCT). 3 disulfides stabilise this stretch: cysteine 609–cysteine 622, cysteine 616–cysteine 631, and cysteine 633–cysteine 639. Asparagine 618 carries an N-linked (GlcNAc...) asparagine glycan. Residues asparagine 624, leucine 625, and glycine 628 each contribute to the Ca(2+) site. Asparagine 638 carries an N-linked (GlcNAc...) asparagine glycan. VWFC domains follow at residues 641-696 (GDCV…PECD) and 701-759 (SQCL…PRCV).

Homotrimer. Binds to PRKCB. Interacts with NICOL1; this interaction triggers epididymal differentiation. As to quaternary structure, binds to PRKCB. Widely expressed. Expressed in cortical astrocytes but not in neuron. In terms of tissue distribution, widely expressed in brain. High expression is observed in telencephalic and diencephalic glutamatergic neurons, while no expression is found in GABAergic and GNRH neurons.

It is found in the secreted. The protein resides in the cytoplasm. Its function is as follows. Plays multiple roles In neural tissues, regulates neuronal proliferation, survival, differentiation, polarization, as well as axon guidance and synaptic functions. Plays an important role in axon development during neuronal differentiation through the MAPK intracellular signaling pathway. Via binding to its receptor ROBO3, plays a role in axon guidance, functioning as a repulsive axon guidance cue that contributes to commissural axon guidance to the midline. Required for neuron survival through the modulation of MAPK signaling pathways too. Involved in the regulation of hypothalamic GNRH secretion and the control of puberty. Epididymal-secreted protein that signals through a ROS1-pathway to regulate the epididymal initial segment (IS) maturation, sperm maturation and male fertility. In terms of biological role, acts as an endogenous inhibitor of PRKCB in glia. In Rattus norvegicus (Rat), this protein is Protein kinase C-binding protein NELL2 (Nell2).